Consider the following 383-residue polypeptide: Izumo sperm-egg fusion protein 1 (383 aa).

An N-terminal signal peptide occupies residues 1-21 (MGLHFTLLLAALANCLCPARL). 5 cysteine pairs are disulfide-bonded: Cys-22-Cys-149, Cys-25-Cys-152, Cys-135-Cys-159, Cys-139-Cys-165, and Cys-182-Cys-233. Topologically, residues 22-306 (CIICDPFVVA…HRPEKKLKSR (285 aa)) are extracellular. An important for interaction with IZUMO1R region spans residues 148-160 (WCNKCEKQMHFCR). The region spanning 167 to 251 (ERQIEVHRLE…PATIIYYHVT (85 aa)) is the Ig-like C2-type domain. N-linked (GlcNAc...) asparagine glycosylation occurs at Asn-204. Residues 307-327 (LLILLILGFVVLVASVIASVL) form a helical membrane-spanning segment. The Cytoplasmic segment spans residues 328–383 (HFRKTRVKSKNSNVENKTSAAEFKSEAESPQKMGSRKLSQAEFHTDSSDKVEEADN). The tract at residues 335–383 (KSKNSNVENKTSAAEFKSEAESPQKMGSRKLSQAEFHTDSSDKVEEADN) is disordered. Over residues 337–346 (KNSNVENKTS) the composition is skewed to polar residues. Ser-339, Ser-346, and Ser-366 each carry phosphoserine. The span at 370–383 (FHTDSSDKVEEADN) shows a compositional bias: basic and acidic residues. The residue at position 372 (Thr-372) is a Phosphothreonine.

This sequence belongs to the Izumo family. Monomer, homodimer; disulfide-linked and homooligomer; depending on the context. Interacts with IZUMO1R/JUNO. IZUMO1 and IZUMO1R/JUNO form a complex with 1:1 stoichiometry. In gamete recognition, IZUMO1R/JUNO first binds to monomeric IZUMO1. The weak, but specific interaction with IZUMO1R/JUNO induces IZUMO1 homodimerization. The process follows a tight binding phase where IZUMO1 bends the entire structure towards the sperm membrane side through a thiol-disulfide exchange reaction. The molecule no longer binds to IZUMO1R/JUNO and instead binds to a putative second oocyte receptor. Interacts with ACE3. Part of a oolemmal binding multimeric complex (IZUMO1 complex) composed at least of IZUMO1 and GLIPR1L1; the complex assemblage is influenced by the maturation status of the male germ cell. Interacts with GLIPR1L1. Interacts with FREY; the interaction retains IZUMO1 at the endoplasmic reticulum membrane and coordinates IZUMO1 complex assembly. Interacts with WDR54. Forms a complex with SPACA6 and TMEM81 on spermatocyte cell membrane. Post-translationally, N-glycosylated. Glycosylation is not essential for fusion and for proper protein trafficking in sperm. Phosphorylated. The cytoplasmic C-terminus is phosphorylated and undergoes phosphorylation changes during epididymal transit. Expressed in sperm (at protein level).

Its subcellular location is the cell membrane. It localises to the cytoplasmic vesicle. The protein resides in the secretory vesicle. The protein localises to the acrosome membrane. Functionally, essential sperm cell-surface protein required for fertilization by acting as a ligand for IZUMO1R/JUNO receptor on egg. The IZUMO1:IZUMO1R/JUNO interaction is a necessary adhesion event between sperm and egg that is required for fertilization but is not sufficient for cell fusion. The ligand-receptor interaction probably does not act as a membrane 'fusogen'. Plays a critical role in sperm-oolemma binding prior to plasma membrane fusion. Can mediate cell-cell fusion in cultured mammalian cells independently of its binding to IZUMO1R/JUNO. This Rattus norvegicus (Rat) protein is Izumo sperm-egg fusion protein 1.